Reading from the N-terminus, the 71-residue chain is Small ribosomal subunit protein bS21 (71 aa).

The protein belongs to the bacterial ribosomal protein bS21 family.

The protein is Small ribosomal subunit protein bS21 of Shewanella amazonensis (strain ATCC BAA-1098 / SB2B).